Reading from the N-terminus, the 181-residue chain is Acireductone dioxygenase (181 aa).

Residues H97, H99, E103, and H141 each coordinate Fe(2+). 4 residues coordinate Ni(2+): H97, H99, E103, and H141.

Belongs to the acireductone dioxygenase (ARD) family. Monomer. Fe(2+) serves as cofactor. The cofactor is Ni(2+).

The catalysed reaction is 1,2-dihydroxy-5-(methylsulfanyl)pent-1-en-3-one + O2 = 3-(methylsulfanyl)propanoate + CO + formate + 2 H(+). It catalyses the reaction 1,2-dihydroxy-5-(methylsulfanyl)pent-1-en-3-one + O2 = 4-methylsulfanyl-2-oxobutanoate + formate + 2 H(+). The protein operates within amino-acid biosynthesis; L-methionine biosynthesis via salvage pathway; L-methionine from S-methyl-5-thio-alpha-D-ribose 1-phosphate: step 5/6. Catalyzes 2 different reactions between oxygen and the acireductone 1,2-dihydroxy-3-keto-5-methylthiopentene (DHK-MTPene) depending upon the metal bound in the active site. Fe-containing acireductone dioxygenase (Fe-ARD) produces formate and 2-keto-4-methylthiobutyrate (KMTB), the alpha-ketoacid precursor of methionine in the methionine recycle pathway. Ni-containing acireductone dioxygenase (Ni-ARD) produces methylthiopropionate, carbon monoxide and formate, and does not lie on the methionine recycle pathway. The polypeptide is Acireductone dioxygenase (Pseudomonas syringae pv. syringae (strain B728a)).